A 949-amino-acid chain; its full sequence is Syndetin (949 aa).

The segment at 1–28 (MQKIKSLMTRQGLRSPQESVHDLSPIEN) is disordered. The segment covering 8-18 (MTRQGLRSPQE) has biased composition (polar residues). 2 coiled-coil regions span residues 82-104 (SLQE…LERV) and 198-226 (YSCI…LSKI). Residues 509 to 581 (FEIQADSKDD…ETLRSRKKSD (73 aa)) form a disordered region. A compositionally biased stretch (basic and acidic residues) spans 569–581 (VSRETLRSRKKSD).

This sequence belongs to the syndetin family. In terms of assembly, component of the endosome-associated retrograde protein (EARP) complex.

It is found in the recycling endosome. Its subcellular location is the membrane. Acts as a component of the EARP complex that is involved in endocytic recycling. The EARP complex associates with Rab4-positive endosomes and promotes recycling of internalized transferrin receptor (TFRC) to the plasma membrane. The chain is Syndetin from Gallus gallus (Chicken).